Consider the following 425-residue polypeptide: Glutamate-1-semialdehyde 2,1-aminomutase (425 aa).

The residue at position 266 (Lys266) is an N6-(pyridoxal phosphate)lysine.

This sequence belongs to the class-III pyridoxal-phosphate-dependent aminotransferase family. HemL subfamily. Homodimer. Pyridoxal 5'-phosphate serves as cofactor.

The protein localises to the cytoplasm. The enzyme catalyses (S)-4-amino-5-oxopentanoate = 5-aminolevulinate. Its pathway is porphyrin-containing compound metabolism; protoporphyrin-IX biosynthesis; 5-aminolevulinate from L-glutamyl-tRNA(Glu): step 2/2. The chain is Glutamate-1-semialdehyde 2,1-aminomutase from Nitratidesulfovibrio vulgaris (strain DSM 19637 / Miyazaki F) (Desulfovibrio vulgaris).